A 245-amino-acid chain; its full sequence is 2,3-bisphosphoglycerate-dependent phosphoglycerate mutase (245 aa).

Substrate is bound by residues 8–15 (RHGQSLWN), 21–22 (TG), arginine 60, 87–90 (ERHY), lysine 98, 114–115 (RR), and 183–184 (GN). The Tele-phosphohistidine intermediate role is filled by histidine 9. The active-site Proton donor/acceptor is glutamate 87.

It belongs to the phosphoglycerate mutase family. BPG-dependent PGAM subfamily.

The catalysed reaction is (2R)-2-phosphoglycerate = (2R)-3-phosphoglycerate. The protein operates within carbohydrate degradation; glycolysis; pyruvate from D-glyceraldehyde 3-phosphate: step 3/5. In terms of biological role, catalyzes the interconversion of 2-phosphoglycerate and 3-phosphoglycerate. In Bacillus mycoides (strain KBAB4) (Bacillus weihenstephanensis), this protein is 2,3-bisphosphoglycerate-dependent phosphoglycerate mutase.